The following is a 582-amino-acid chain: Aspartate--tRNA(Asp/Asn) ligase (582 aa).

Residue E177 participates in L-aspartate binding. The segment at 201-204 (QLFK) is aspartate. Position 223 (R223) interacts with L-aspartate. Residues 223–225 (RDE) and Q232 contribute to the ATP site. Residue H447 participates in L-aspartate binding. E481 is a binding site for ATP. R488 contacts L-aspartate. 533-536 (GLDR) is an ATP binding site.

It belongs to the class-II aminoacyl-tRNA synthetase family. Type 1 subfamily. Homodimer.

Its subcellular location is the cytoplasm. It carries out the reaction tRNA(Asx) + L-aspartate + ATP = L-aspartyl-tRNA(Asx) + AMP + diphosphate. In terms of biological role, aspartyl-tRNA synthetase with relaxed tRNA specificity since it is able to aspartylate not only its cognate tRNA(Asp) but also tRNA(Asn). Reaction proceeds in two steps: L-aspartate is first activated by ATP to form Asp-AMP and then transferred to the acceptor end of tRNA(Asp/Asn). This chain is Aspartate--tRNA(Asp/Asn) ligase, found in Chlamydia muridarum (strain MoPn / Nigg).